The sequence spans 598 residues: DNA (cytosine-5)-methyltransferase DRM2 (598 aa).

Disordered stretches follow at residues 1–49 (MVDW…NGKA) and 114–146 (EVDE…GDED). Residues 42-91 (PQDANGKANGSGALVAEFMGMGFPKEMILKAIKEIGDTDTEQLLELLLTY) enclose the UBA 1 domain. The segment covering 114–128 (EVDEEEDDTNWDEYD) has biased composition (acidic residues). The UBA 2 domain maps to 150–194 (EMSEKDEKMKSLVNMGFPEDEAKMAIDRCGLDAPVAVLVDSIYAS). Residues 227–252 (GSKKRKRYGSGPSGNQVPFDGSHEEP) are disordered. The SAM-dependent MTase DRM-type domain occupies 272–598 (VHRNLPDQAL…EHVKATMSAV (327 aa)).

Belongs to the class I-like SAM-binding methyltransferase superfamily. DRM-methyltransferase family. Interacts (via UBA domains) with EIF4A.

The protein resides in the nucleus. It catalyses the reaction a 2'-deoxycytidine in DNA + S-adenosyl-L-methionine = a 5-methyl-2'-deoxycytidine in DNA + S-adenosyl-L-homocysteine + H(+). Involved in de novo DNA methylation. Required for CpG and non-CpG methylation. Required for normal establishment and maintenance of RNA-directed DNA methylation (RdDM) mediated by small interfering RNAs (siRNAs). Regulates proper plant development in both vegetative and reproductive stages through DNA methylation. The sequence is that of DNA (cytosine-5)-methyltransferase DRM2 from Oryza sativa subsp. japonica (Rice).